Reading from the N-terminus, the 622-residue chain is Low affinity potassium transport system protein Kup (622 aa).

The next 12 membrane-spanning stretches (helical) occupy residues 9-29, 49-69, 103-123, 137-157, 165-185, 213-233, 247-267, 276-296, 337-357, 363-383, 396-416, and 419-439; these read LPAI…TSPL, VFGF…IKYL, VIMG…TPAI, PQLD…LFMI, VGKL…VLGL, VSFI…ALYA, WFTV…ALLL, PFFL…AALA, IYIP…IVSF, LAAA…ILST, LVAL…SANL, and LLSG…IMTT.

This sequence belongs to the HAK/KUP transporter (TC 2.A.72) family.

It localises to the cell inner membrane. The catalysed reaction is K(+)(in) + H(+)(in) = K(+)(out) + H(+)(out). Functionally, responsible for the low-affinity transport of potassium into the cell. Likely operates as a K(+):H(+) symporter. The chain is Low affinity potassium transport system protein Kup from Salmonella arizonae (strain ATCC BAA-731 / CDC346-86 / RSK2980).